Consider the following 354-residue polypeptide: Replication factor C subunit 5 (354 aa).

ATP is bound by residues Val5, Ser17, 43–51, and Arg231; that span reads GPNGTGKKT.

The protein belongs to the activator 1 small subunits family. In terms of assembly, replication factor C (RFC) is a heteropentamer of subunits RFC1, RFC2, RFC3, RFC4 and RFC5 and forms a complex with POL30/PCNA in the presence of ATP. Component of the RAD24-RFC complex which consists of RAD24, RFC2, RFC3, RFC4 and RFC5 and associates with the checkpoint clamp DDC1:MEC3:RAD17 complex. Component of the ELG1-RFC complex which consists of ELG1, RFC2, RFC3, RFC4 and RFC5. Component of the CTF18-RFC complex, which consists of CTF18, CTF8, DCC1, RFC2, RFC3, RFC4 and RFC5. RFC5 interacts with ECO1.

Its subcellular location is the nucleus. Its function is as follows. Component of ATP-dependent clamp loader (RFC and RFC-like) complexes for DNA clamps, such as the POL30/PCNA homotrimer and the checkpoint clamp DDC1:MEC3:RAD17 complex. During a clamp loading circle, the RFC:clamp complex binds to DNA and the recognition of the double-stranded/single-stranded junction stimulates ATP hydrolysis by RFC. The complex presumably provides bipartite ATP sites in which one subunit supplies a catalytic site for hydrolysis of ATP bound to the neighboring subunit. Dissociation of RFC from the clamp leaves the clamp encircling DNA. Component of the replication factor C (RFC or activator 1) complex which loads POL30/PCNA and acts during elongation of primed DNA templates by DNA polymerase delta and epsilon. RFC has an essential but redundant activity in sister chromatid cohesion establishment. Component of the RFC-like complex CTF18-RFC which is required for efficient establishment of chromosome cohesion during S-phase and may load or unload POL30/PCNA. Component of the RFC-like RAD24-RFC complex which loads the checkpoint clamp DDC1:MEC3:RAD17 complex and is involved in DNA repair pathways. Component of the RFC-like ELG1-RFC complex which appears to have a role in DNA replication, replication fork re-start, recombination and repair. The chain is Replication factor C subunit 5 (RFC5) from Saccharomyces cerevisiae (strain ATCC 204508 / S288c) (Baker's yeast).